The sequence spans 902 residues: AAA+ ATPase ClpV1 (902 aa).

Residues 10-151 (FGKLNSLAYK…KVEALTERFD (142 aa)) form the Clp R domain. 2 repeat regions span residues 13–78 (LNSL…LDRL) and 88–151 (LSSH…ERFD). Residue 237-244 (GEAGVGKT) coordinates ATP. A coiled-coil region spans residues 441–559 (AEVDDSRRRI…AQLSALQGEE (119 aa)). Residue 640-647 (GTSGVGKT) coordinates ATP.

Belongs to the ClpA/ClpB family. In terms of assembly, interacts with TagJ.

The protein localises to the cytoplasm. Its function is as follows. Component of the H1 type VI (H1-T6SS) secretion system that plays a role in the release of toxins targeting both eukaryotic and prokaryotic species. Acts as an AAA(+) ATPase that disassembles the contracted sheath, which resets the systems for reassembly of an extended sheath that is ready to fire again. The sequence is that of AAA+ ATPase ClpV1 (clpV1) from Pseudomonas aeruginosa (strain ATCC 15692 / DSM 22644 / CIP 104116 / JCM 14847 / LMG 12228 / 1C / PRS 101 / PAO1).